The primary structure comprises 510 residues: ATP synthase subunit alpha (510 aa).

169 to 176 serves as a coordination point for ATP; it reads GDRQTGKT.

The protein belongs to the ATPase alpha/beta chains family. In terms of assembly, F-type ATPases have 2 components, CF(1) - the catalytic core - and CF(0) - the membrane proton channel. CF(1) has five subunits: alpha(3), beta(3), gamma(1), delta(1), epsilon(1). CF(0) has three main subunits: a(1), b(2) and c(9-12). The alpha and beta chains form an alternating ring which encloses part of the gamma chain. CF(1) is attached to CF(0) by a central stalk formed by the gamma and epsilon chains, while a peripheral stalk is formed by the delta and b chains.

The protein resides in the cell inner membrane. The catalysed reaction is ATP + H2O + 4 H(+)(in) = ADP + phosphate + 5 H(+)(out). Its function is as follows. Produces ATP from ADP in the presence of a proton gradient across the membrane. The alpha chain is a regulatory subunit. This Nitrobacter hamburgensis (strain DSM 10229 / NCIMB 13809 / X14) protein is ATP synthase subunit alpha.